Consider the following 242-residue polypeptide: uncharacterized protein (242 aa).

The region spanning 8–76 (TPLYIQLKQI…QGKGTFVKSP (69 aa)) is the HTH gntR-type domain. The H-T-H motif DNA-binding region spans 36–55 (ENELCTKYNVSRITVRKAIL).

This is an uncharacterized protein from Bacillus subtilis (strain 168).